The sequence spans 256 residues: Imidazole glycerol phosphate synthase subunit HisF (256 aa).

Residues D12 and D131 contribute to the active site.

It belongs to the HisA/HisF family. Heterodimer of HisH and HisF.

Its subcellular location is the cytoplasm. The catalysed reaction is 5-[(5-phospho-1-deoxy-D-ribulos-1-ylimino)methylamino]-1-(5-phospho-beta-D-ribosyl)imidazole-4-carboxamide + L-glutamine = D-erythro-1-(imidazol-4-yl)glycerol 3-phosphate + 5-amino-1-(5-phospho-beta-D-ribosyl)imidazole-4-carboxamide + L-glutamate + H(+). The protein operates within amino-acid biosynthesis; L-histidine biosynthesis; L-histidine from 5-phospho-alpha-D-ribose 1-diphosphate: step 5/9. In terms of biological role, IGPS catalyzes the conversion of PRFAR and glutamine to IGP, AICAR and glutamate. The HisF subunit catalyzes the cyclization activity that produces IGP and AICAR from PRFAR using the ammonia provided by the HisH subunit. The sequence is that of Imidazole glycerol phosphate synthase subunit HisF from Bifidobacterium longum (strain NCC 2705).